The chain runs to 624 residues: APC membrane recruitment protein 2 (624 aa).

2 disordered regions span residues 1–308 (MDSH…PPSE) and 342–596 (EDVG…IPVS). Over residues 74–91 (SGKKEDAGGGEAQGKDAP) the composition is skewed to basic and acidic residues. The span at 101–111 (SASSSVAKSHS) shows a compositional bias: low complexity. 2 stretches are compositionally biased toward basic and acidic residues: residues 120-132 (GRPENGKAAENAE) and 247-258 (RRLEELCGERPD). Low complexity-rich tracts occupy residues 272–282 (ITGDIPITTIP) and 295–307 (AAAPDPSSVDPPS). Positions 406–416 (TGGGGGGGGGT) are enriched in gly residues. The segment covering 450–464 (NNKEEQKGREKEQHE) has biased composition (basic and acidic residues). Over residues 535–549 (PITTTCSLKTPSSTV) the composition is skewed to polar residues.

It belongs to the Amer family.

The protein localises to the cell membrane. Negative regulator of the canonical Wnt signaling pathway involved in neuroectodermal patterning. Acts by specifically binding phosphatidylinositol 4,5-bisphosphate (PtdIns(4,5)P2), translocating to the cell membrane and interacting with key regulators of the canonical Wnt signaling pathway, such as components of the beta-catenin destruction complex. The protein is APC membrane recruitment protein 2 (AMER2) of Gallus gallus (Chicken).